A 362-amino-acid chain; its full sequence is uncharacterized protein (362 aa).

3 disordered regions span residues 1–117 (MASK…GLNR), 153–172 (SSAPGTSASTSGSPSVGIRK), and 210–266 (RHFD…SSSN). Residues 12 to 23 (AKKEKEIKKEIE) are compositionally biased toward basic and acidic residues. The span at 51–70 (ENDDTDGDGKEEDAQKEDDI) shows a compositional bias: acidic residues. Low complexity-rich tracts occupy residues 100 to 112 (NSPPSESSSTRNT), 153 to 167 (SSAPGTSASTSGSPS), and 241 to 265 (VPPSAVSPAPGSGSSASSGTSTSSS).

This is an uncharacterized protein from Caenorhabditis elegans.